The sequence spans 192 residues: Secreted phosphoprotein 24 (192 aa).

The N-terminal stretch at 1 to 29 (MGKTPEDFERHTMRSLIFVLALSVFTCSG) is a signal peptide. Disulfide bonds link cysteine 92-cysteine 103 and cysteine 116-cysteine 134. Residues 155 to 192 (TDPRKRGSSRSEAFSSRGRGHSNGDWRKPDYTSPGKVE) are disordered.

Belongs to the SPP2 family. Multiply phosphorylated at serine residues.

The protein resides in the secreted. In terms of biological role, could coordinate an aspect of bone turnover. This chain is Secreted phosphoprotein 24 (SPP2), found in Gallus gallus (Chicken).